We begin with the raw amino-acid sequence, 556 residues long: U3 small nucleolar RNA-associated protein 18 homolog (556 aa).

Basic residues predominate over residues 1–24; that stretch reads MPPERRRRMKLDRRTGAKPKRKPG. Residues 1–70 form a disordered region; the sequence is MPPERRRRMK…IAVAAAEEER (70 aa). Residues 43–65 are compositionally biased toward low complexity; that stretch reads APSSQRKPPARPSAAAAAIAVAA. A Glycyl lysine isopeptide (Lys-Gly) (interchain with G-Cter in SUMO2) cross-link involves residue Lys84. The interval 111-143 is disordered; it reads RGPRVQEHEDSGDSEVENEAKGNFPPQKKPVWV. Phosphoserine occurs at positions 121 and 124. Residues Lys183 and Lys201 each participate in a glycyl lysine isopeptide (Lys-Gly) (interchain with G-Cter in SUMO2) cross-link. Positions 193–219 are disordered; it reads VPAWAETTKRKTSSDDESEEDEDDLLQ. Thr204 is subject to Phosphothreonine. Residues Ser205, Ser206, and Ser210 each carry the phosphoserine modification. Residues 207–216 are compositionally biased toward acidic residues; it reads DDESEEDEDD. Thr221 carries the post-translational modification Phosphothreonine. 6 WD repeats span residues 249–288, 293–333, 339–380, 381–419, 421–462, and 471–512; these read PTVARISSVQFHPGAQIVMVAGLDNAVSLFQVDGKTNPKI, LERF…LIPV, LKEK…GSMK, INGRVAASTFSSDSKKVYASSGDGEVYVWDVNSRKCLNR, VDEG…QETN, and NLVT…VFSN. Lys517 participates in a covalent cross-link: Glycyl lysine isopeptide (Lys-Gly) (interchain with G-Cter in SUMO2).

Belongs to the WD repeat UTP18 family. As to quaternary structure, part of the small subunit (SSU) processome, composed of more than 70 proteins and the RNA chaperone small nucleolar RNA (snoRNA) U3.

Its subcellular location is the nucleus. It localises to the nucleolus. Its function is as follows. Part of the small subunit (SSU) processome, first precursor of the small eukaryotic ribosomal subunit. During the assembly of the SSU processome in the nucleolus, many ribosome biogenesis factors, an RNA chaperone and ribosomal proteins associate with the nascent pre-rRNA and work in concert to generate RNA folding, modifications, rearrangements and cleavage as well as targeted degradation of pre-ribosomal RNA by the RNA exosome. Involved in nucleolar processing of pre-18S ribosomal RNA. This is U3 small nucleolar RNA-associated protein 18 homolog from Homo sapiens (Human).